Reading from the N-terminus, the 296-residue chain is Pyruvate synthase subunit PorB (296 aa).

[4Fe-4S] cluster is bound by residues Cys-17, Cys-20, and Cys-45. The span at 140 to 150 shows a compositional bias: polar residues; sequence TPFDASTTTTP. Positions 140–159 are disordered; the sequence is TPFDASTTTTPAGKVSFGNP. Cys-210 contacts [4Fe-4S] cluster.

Heterotetramer of one alpha, one beta, one delta and one gamma chain. The cofactor is [4Fe-4S] cluster.

The catalysed reaction is 2 oxidized [2Fe-2S]-[ferredoxin] + pyruvate + CoA = 2 reduced [2Fe-2S]-[ferredoxin] + acetyl-CoA + CO2 + H(+). This is Pyruvate synthase subunit PorB (porB) from Methanosarcina barkeri (strain Fusaro / DSM 804).